The primary structure comprises 588 residues: Mediator of RNA polymerase II transcription subunit 26 (588 aa).

The region spanning 10–87 is the TFIIS N-terminal domain; it reads QMRDRLLQAI…RSWQKLIEPV (78 aa). 2 disordered regions span residues 112 to 393 and 412 to 441; these read RPEM…YTVN and KLTF…PTEQ. Basic and acidic residues predominate over residues 123 to 133; sequence SIHDLKNRNDI. Positions 179 to 191 are enriched in polar residues; it reads PLPTNGISGSPES. Residues 207 to 218 show a composition bias toward basic and acidic residues; the sequence is SRLEPSDNEKHS. The span at 314-325 shows a compositional bias: pro residues; it reads SPLPLAQPPTPP. Residues Ser-435 and Ser-458 each carry the phosphoserine modification.

Belongs to the Mediator complex subunit 26 family. In terms of assembly, component of the Mediator complex, which is composed of MED1, MED4, MED6, MED7, MED8, MED9, MED10, MED11, MED12, MED13, MED13L, MED14, MED15, MED16, MED17, MED18, MED19, MED20, MED21, MED22, MED23, MED24, MED25, MED26, MED27, MED29, MED30, MED31, CCNC, CDK8 and CDC2L6/CDK11. The MED12, MED13, CCNC and CDK8 subunits form a distinct module termed the CDK8 module. Mediator containing the CDK8 module is less active than Mediator lacking this module in supporting transcriptional activation. Individual preparations of the Mediator complex lacking one or more distinct subunits have been variously termed ARC, CRSP, DRIP, PC2, SMCC and TRAP. Interacts with CEBPB (when not methylated).

The protein resides in the nucleus. Its function is as follows. Component of the Mediator complex, a coactivator involved in the regulated transcription of nearly all RNA polymerase II-dependent genes. Mediator functions as a bridge to convey information from gene-specific regulatory proteins to the basal RNA polymerase II transcription machinery. Mediator is recruited to promoters by direct interactions with regulatory proteins and serves as a scaffold for the assembly of a functional pre-initiation complex with RNA polymerase II and the general transcription factors. The protein is Mediator of RNA polymerase II transcription subunit 26 (Med26) of Mus musculus (Mouse).